The chain runs to 194 residues: MRTRSRSTVRPLWPPPSPARFATWSHYRLRDHGDHTRPVDPRSAGTQVDDEVLEERVAYNLSKDAQLKEEARINVVAYNGKVLLIGQAPTMSASESAKNLAAGAEGVTEIYNEIRTGEKIGVGQISIDSWITTAIKSKLLANSEVKATEVKVITENGEVFLIGKLSPAQADAAAEVARNVRGVNKVIKVINYVQ.

Residues 1-19 (MRTRSRSTVRPLWPPPSPA) form the signal peptide. BON domains are found at residues 49 to 118 (DDEV…RTGE) and 127 to 194 (IDSW…NYVQ).

The protein localises to the periplasm. This Actinobacillus pleuropneumoniae (Haemophilus pleuropneumoniae) protein is 21 kDa hemolysin (hly).